The sequence spans 84 residues: uncharacterized protein (84 aa).

This is an uncharacterized protein from Helicobacter pylori (strain ATCC 700392 / 26695) (Campylobacter pylori).